Here is a 253-residue protein sequence, read N- to C-terminus: UPF0280 protein Mbar_A3697 (253 aa).

The protein belongs to the UPF0280 family.

The protein is UPF0280 protein Mbar_A3697 of Methanosarcina barkeri (strain Fusaro / DSM 804).